Consider the following 366-residue polypeptide: tRNA(Met) cytidine acetate ligase (366 aa).

Residues 7–20, Gly96, Asn152, and Arg175 each bind ATP; that span reads VAEF…HKYL.

Belongs to the TmcAL family.

It localises to the cytoplasm. The enzyme catalyses cytidine(34) in elongator tRNA(Met) + acetate + ATP = N(4)-acetylcytidine(34) in elongator tRNA(Met) + AMP + diphosphate. Catalyzes the formation of N(4)-acetylcytidine (ac(4)C) at the wobble position of elongator tRNA(Met), using acetate and ATP as substrates. First activates an acetate ion to form acetyladenylate (Ac-AMP) and then transfers the acetyl group to tRNA to form ac(4)C34. The protein is tRNA(Met) cytidine acetate ligase of Streptococcus uberis (strain ATCC BAA-854 / 0140J).